The chain runs to 483 residues: Siroheme synthase (483 aa).

The precorrin-2 dehydrogenase /sirohydrochlorin ferrochelatase stretch occupies residues 1–203; the sequence is MNYFPIFANL…RQNTLAEREL (203 aa). NAD(+) contacts are provided by residues 22–23 and 43–44; these read AV and KH. Ser-128 bears the Phosphoserine mark. The uroporphyrinogen-III C-methyltransferase stretch occupies residues 214–483; sequence GFVSLVGAGP…LGTGQEQQAA (270 aa). Pro-223 lines the S-adenosyl-L-methionine pocket. Asp-246 (proton acceptor) is an active-site residue. Lys-268 serves as the catalytic Proton donor. S-adenosyl-L-methionine is bound by residues 299 to 301, Val-304, 329 to 330, Met-381, and Gly-410; these read GGD and TA.

The protein in the N-terminal section; belongs to the precorrin-2 dehydrogenase / sirohydrochlorin ferrochelatase family. In the C-terminal section; belongs to the precorrin methyltransferase family.

It catalyses the reaction uroporphyrinogen III + 2 S-adenosyl-L-methionine = precorrin-2 + 2 S-adenosyl-L-homocysteine + H(+). The catalysed reaction is precorrin-2 + NAD(+) = sirohydrochlorin + NADH + 2 H(+). It carries out the reaction siroheme + 2 H(+) = sirohydrochlorin + Fe(2+). Its pathway is cofactor biosynthesis; adenosylcobalamin biosynthesis; precorrin-2 from uroporphyrinogen III: step 1/1. The protein operates within cofactor biosynthesis; adenosylcobalamin biosynthesis; sirohydrochlorin from precorrin-2: step 1/1. It functions in the pathway porphyrin-containing compound metabolism; siroheme biosynthesis; precorrin-2 from uroporphyrinogen III: step 1/1. It participates in porphyrin-containing compound metabolism; siroheme biosynthesis; siroheme from sirohydrochlorin: step 1/1. Its pathway is porphyrin-containing compound metabolism; siroheme biosynthesis; sirohydrochlorin from precorrin-2: step 1/1. Functionally, multifunctional enzyme that catalyzes the SAM-dependent methylations of uroporphyrinogen III at position C-2 and C-7 to form precorrin-2 via precorrin-1. Then it catalyzes the NAD-dependent ring dehydrogenation of precorrin-2 to yield sirohydrochlorin. Finally, it catalyzes the ferrochelation of sirohydrochlorin to yield siroheme. In Neisseria meningitidis serogroup C / serotype 2a (strain ATCC 700532 / DSM 15464 / FAM18), this protein is Siroheme synthase.